The chain runs to 258 residues: Rho-related GTP-binding protein RhoU (258 aa).

The tract at residues 1–45 (MPPQQGDPAFPDRCEAPPVPPRRERGGRGGRGPGEPGGRGRAGGA) is disordered. Residues 10–27 (FPDRCEAPPVPPRRERGG) show a composition bias toward basic and acidic residues. The span at 29-45 (GGRGPGEPGGRGRAGGA) shows a compositional bias: gly residues. GTP-binding positions include 56-63 (GDGAVGKT), 103-107 (DTAGQ), and 161-164 (TQSD). Residues K177 and K248 each participate in a glycyl lysine isopeptide (Lys-Gly) (interchain with G-Cter in ubiquitin) cross-link. The S-palmitoyl cysteine moiety is linked to residue C256.

It belongs to the small GTPase superfamily. Rho family. In terms of assembly, interacts with PAK1. Interacts with PAK3. Interacts with ARHGAP30 in a GTP-independent manner. In its GTP-loaded conformation, interacts with ARHGAP31. Interacts with PTK2B/PYK2. Interacts with PAK4; the interaction is PAK4 kinase activity-independent and protects RHOU from ubiquitination. It depends on Mg(2+) as a cofactor. Post-translationally, ubiquitinated. 'Lys-48'-linked ubiquitination at Lys-177 and Lys-248 by the ECS(RAB40A) complex leading to its degradation. In terms of processing, tyrosine phosphorylated by SRC in response to PTK2B/PYK2 activation. As to expression, ubiquitously expressed in all tissues examined. Expressed at high levels in the stomach, small intestine, brain, skeletal muscle and placenta.

It is found in the cell membrane. Its subcellular location is the golgi apparatus membrane. The protein localises to the cell junction. It localises to the focal adhesion. The protein resides in the cell projection. It is found in the podosome. Binds to and activates protein kinase PAK1. Plays a role in the regulation of cell morphology, cytoskeletal organization and focal adhesion assembly during cell migration. Also stimulates quiescent cells to reenter the cell cycle. Has no detectable GTPase activity but its high intrinsic guanine nucleotide exchange activity suggests it is constitutively GTP-bound. In Homo sapiens (Human), this protein is Rho-related GTP-binding protein RhoU.